A 187-amino-acid chain; its full sequence is Elongation factor P (187 aa).

The protein belongs to the elongation factor P family.

The protein resides in the cytoplasm. It functions in the pathway protein biosynthesis; polypeptide chain elongation. In terms of biological role, involved in peptide bond synthesis. Stimulates efficient translation and peptide-bond synthesis on native or reconstituted 70S ribosomes in vitro. Probably functions indirectly by altering the affinity of the ribosome for aminoacyl-tRNA, thus increasing their reactivity as acceptors for peptidyl transferase. The protein is Elongation factor P of Thermodesulfovibrio yellowstonii (strain ATCC 51303 / DSM 11347 / YP87).